A 506-amino-acid chain; its full sequence is Cysteine protease 1 (506 aa).

The segment at 1-21 is disordered; the sequence is MTSSRPSGRDSTGWQETVSNT. Catalysis depends on cysteine 226, which acts as the Nucleophile. Active-site residues include aspartate 399 and histidine 401.

It belongs to the peptidase C54 family.

The protein localises to the cytoplasm. It is found in the nucleus. Its subcellular location is the preautophagosomal structure. The catalysed reaction is [protein]-C-terminal L-amino acid-glycyl-phosphatidylethanolamide + H2O = [protein]-C-terminal L-amino acid-glycine + a 1,2-diacyl-sn-glycero-3-phosphoethanolamine. In terms of biological role, cysteine protease that plays a key role in cytoplasm to vacuole transport (Cvt) and autophagy by mediating both proteolytic activation and delipidation of ATG8. Required for selective autophagic degradation of the nucleus (nucleophagy) as well as for mitophagy which contributes to regulate mitochondrial quantity and quality by eliminating the mitochondria to a basal level to fulfill cellular energy requirements and preventing excess ROS production. The protease activity is required for proteolytic activation of ATG8: cleaves the C-terminal amino acid of ATG8 to reveal a C-terminal glycine. ATG8 ubiquitin-like activity requires the exposure of the glycine at the C-terminus for its conjugation to phosphatidylethanolamine (PE) and its insertion to membranes, which is necessary for autophagy. The ATG8-PE conjugate mediates tethering between adjacent membranes and stimulates membrane hemifusion, leading to expansion of the autophagosomal membrane during autophagy. In addition to the protease activity, also catalyzes deconjugation of PE-conjugated forms of ATG8 during macroautophagy: ATG8 delipidation is required to release the protein from membranes, which facilitates multiple events during macroautophagy, and especially for efficient autophagosome biogenesis, the assembly of ATG9-containing tubulovesicular clusters into phagophores/autophagosomes, and for the disassembly of PAS-associated ATG components. ATG8 delipidation by ATG4 also recycles ATG8-PE generated on inappropriate membranes to maintain a reservoir of unlipidated ATG8 that is required for autophagosome formation at the PAS. The sequence is that of Cysteine protease 1 (cpr-1) from Neurospora crassa (strain ATCC 24698 / 74-OR23-1A / CBS 708.71 / DSM 1257 / FGSC 987).